We begin with the raw amino-acid sequence, 347 residues long: UDP-N-acetylenolpyruvoylglucosamine reductase (347 aa).

The region spanning Leu-23 to Ala-197 is the FAD-binding PCMH-type domain. Arg-174 is an active-site residue. Ser-247 serves as the catalytic Proton donor. Residue Glu-343 is part of the active site.

The protein belongs to the MurB family. FAD serves as cofactor.

Its subcellular location is the cytoplasm. It carries out the reaction UDP-N-acetyl-alpha-D-muramate + NADP(+) = UDP-N-acetyl-3-O-(1-carboxyvinyl)-alpha-D-glucosamine + NADPH + H(+). It participates in cell wall biogenesis; peptidoglycan biosynthesis. Functionally, cell wall formation. The chain is UDP-N-acetylenolpyruvoylglucosamine reductase from Azoarcus sp. (strain BH72).